The sequence spans 305 residues: uncharacterized protein (305 aa).

An N-terminal signal peptide occupies residues 1–29 (MSKAVSEILGYMYIFGIVMAVLAIVFVQV).

This is an uncharacterized protein from Archaeoglobus fulgidus (strain ATCC 49558 / DSM 4304 / JCM 9628 / NBRC 100126 / VC-16).